The chain runs to 215 residues: Probable glutathione S-transferase GSTF2 (215 aa).

Residues 2–83 enclose the GST N-terminal domain; that stretch reads APMKLYGSTL…YVCRKNKPEL (82 aa). Residues S12, 41–42, 54–55, and 67–68 contribute to the glutathione site; these read HK, QV, and ES. Residues 88–215 form the GST C-terminal domain; it reads DLKESAMVDV…KVASLMKPPA (128 aa).

This sequence belongs to the GST superfamily. Phi family. In terms of tissue distribution, constitutively expressed in roots. Expressed in anthers, callus, panicles, sheaths and stems (at protein level).

The enzyme catalyses RX + glutathione = an S-substituted glutathione + a halide anion + H(+). Its function is as follows. Conjugation of reduced glutathione to a wide number of exogenous and endogenous hydrophobic electrophiles. This Oryza sativa subsp. japonica (Rice) protein is Probable glutathione S-transferase GSTF2 (GSTF2).